A 95-amino-acid polypeptide reads, in one-letter code: MLHTLHRSPWLTDFAALLRLLSEGDELLLLQDGVTAGVDGNCYLESLRNAPIKVYALNEDLIARGLTGRISNDIIPIDYTDFVRLTVKHSSQMAW.

Belongs to the DsrH/TusB family. Heterohexamer, formed by a dimer of trimers. The hexameric TusBCD complex contains 2 copies each of TusB, TusC and TusD. The TusBCD complex interacts with TusE.

The protein resides in the cytoplasm. Its function is as follows. Part of a sulfur-relay system required for 2-thiolation of 5-methylaminomethyl-2-thiouridine (mnm(5)s(2)U) at tRNA wobble positions. In Escherichia coli (strain SMS-3-5 / SECEC), this protein is Protein TusB.